The primary structure comprises 205 residues: Protein N-terminal glutamine amidohydrolase (205 aa).

Residues Cys20, His74, and Asp90 contribute to the active site.

It belongs to the NTAQ1 family. Monomer.

The enzyme catalyses N-terminal L-glutaminyl-[protein] + H2O = N-terminal L-glutamyl-[protein] + NH4(+). Mediates the side-chain deamidation of N-terminal glutamine residues to glutamate, an important step in N-end rule pathway of protein degradation. Conversion of the resulting N-terminal glutamine to glutamate renders the protein susceptible to arginylation, polyubiquitination and degradation as specified by the N-end rule. Does not act on substrates with internal or C-terminal glutamine and does not act on non-glutamine residues in any position. The polypeptide is Protein N-terminal glutamine amidohydrolase (tun) (Drosophila mojavensis (Fruit fly)).